The primary structure comprises 146 residues: Fluoride-specific ion channel FluC (146 aa).

The next 4 helical transmembrane spans lie at 8 to 28, 47 to 67, 91 to 111, and 121 to 141; these read FAIA…TLTV, LANL…QALV, IGVL…AVFA, and MLLG…AAVV. Na(+)-binding residues include G95 and T98.

Belongs to the fluoride channel Fluc/FEX (TC 1.A.43) family.

It is found in the cell inner membrane. The enzyme catalyses fluoride(in) = fluoride(out). Its activity is regulated as follows. Na(+) is not transported, but it plays an essential structural role and its presence is essential for fluoride channel function. Functionally, fluoride-specific ion channel. Important for reducing fluoride concentration in the cell, thus reducing its toxicity. This is Fluoride-specific ion channel FluC from Rhodopirellula baltica (strain DSM 10527 / NCIMB 13988 / SH1).